Consider the following 400-residue polypeptide: MRTIDDLQVTGHRVLVRSDLNVPLDHSKGAPRITDDGRVRASVPTIQALLDRNAKVIVCSHLGRPKGAPEEKYSLAPVAERLAELLGIPVAFAGDGGGDIAGDRAREVVGQLAEGQVALLENLRFHPGETSKDTVARATFADELSALAEFYVGDAFGAVHRAHASVSEVPKRLPHAAGRLVLTELEVLRALTAAPARPYAVVLGGSKVSDKLGVIRALLPKVDALLVGGGMCFTFLAALGHPVGASLLESEMIDTCKDLLAEAGDRLVLPTDVVVADRFAADAETAVVAADAIPDGWLGLDIGPASTAAFARVVAGAATIFWNGPMGVFEFAPFAEGTRGVAEAVASGGGFSVVGGGDSAAAVRILGIPEDDFSHISTGGGASLEYLEGKTLPGLAALDV.

Substrate contacts are provided by residues 19–21 (DLN), R38, 61–64 (HLGR), R124, and R161. ATP is bound by residues K211, G299, E330, and 356-359 (GGDS).

It belongs to the phosphoglycerate kinase family. Monomer.

Its subcellular location is the cytoplasm. It catalyses the reaction (2R)-3-phosphoglycerate + ATP = (2R)-3-phospho-glyceroyl phosphate + ADP. The protein operates within carbohydrate degradation; glycolysis; pyruvate from D-glyceraldehyde 3-phosphate: step 2/5. This Parafrankia sp. (strain EAN1pec) protein is Phosphoglycerate kinase.